A 152-amino-acid chain; its full sequence is Sec-independent protein translocase protein TatB (152 aa).

Residues Met1–Gly21 form a helical membrane-spanning segment. Over residues Glu60 to Ala71 the composition is skewed to basic and acidic residues. The tract at residues Glu60 to Ser152 is disordered. Low complexity-rich tracts occupy residues Thr84–Asp98 and Ala124–Ala140. Residues Lys141 to Ser152 are compositionally biased toward basic and acidic residues.

Belongs to the TatB family. In terms of assembly, the Tat system comprises two distinct complexes: a TatABC complex, containing multiple copies of TatA, TatB and TatC subunits, and a separate TatA complex, containing only TatA subunits. Substrates initially bind to the TatABC complex, which probably triggers association of the separate TatA complex to form the active translocon.

It is found in the cell inner membrane. In terms of biological role, part of the twin-arginine translocation (Tat) system that transports large folded proteins containing a characteristic twin-arginine motif in their signal peptide across membranes. Together with TatC, TatB is part of a receptor directly interacting with Tat signal peptides. TatB may form an oligomeric binding site that transiently accommodates folded Tat precursor proteins before their translocation. The polypeptide is Sec-independent protein translocase protein TatB (Zymomonas mobilis subsp. mobilis (strain ATCC 31821 / ZM4 / CP4)).